A 432-amino-acid polypeptide reads, in one-letter code: D-amino acid dehydrogenase (432 aa).

Residue 3-17 (VVILGSGVVGVTSAW) coordinates FAD.

Belongs to the DadA oxidoreductase family. It depends on FAD as a cofactor.

The catalysed reaction is a D-alpha-amino acid + A + H2O = a 2-oxocarboxylate + AH2 + NH4(+). It participates in amino-acid degradation; D-alanine degradation; NH(3) and pyruvate from D-alanine: step 1/1. Its function is as follows. Oxidative deamination of D-amino acids. In Citrobacter koseri (strain ATCC BAA-895 / CDC 4225-83 / SGSC4696), this protein is D-amino acid dehydrogenase.